A 118-amino-acid polypeptide reads, in one-letter code: Small ribosomal subunit protein uS13 (118 aa).

Residues 94–118 (GLPLRGQRTRTNARTRKGPRKAIRK) are disordered.

The protein belongs to the universal ribosomal protein uS13 family. In terms of assembly, part of the 30S ribosomal subunit. Forms a loose heterodimer with protein S19. Forms two bridges to the 50S subunit in the 70S ribosome.

Functionally, located at the top of the head of the 30S subunit, it contacts several helices of the 16S rRNA. In the 70S ribosome it contacts the 23S rRNA (bridge B1a) and protein L5 of the 50S subunit (bridge B1b), connecting the 2 subunits; these bridges are implicated in subunit movement. Contacts the tRNAs in the A and P-sites. This Xanthomonas axonopodis pv. citri (strain 306) protein is Small ribosomal subunit protein uS13.